A 647-amino-acid chain; its full sequence is Threonine--tRNA ligase (647 aa).

Positions 1–61 (MIKITFPDGA…EEDGSIEIVT (61 aa)) constitute a TGS domain. Residues 240–538 (DHRKLGKELD…LIETYKGAFP (299 aa)) are catalytic. 3 residues coordinate Zn(2+): Cys-334, His-385, and His-515.

Belongs to the class-II aminoacyl-tRNA synthetase family. As to quaternary structure, homodimer. The cofactor is Zn(2+).

The protein resides in the cytoplasm. The catalysed reaction is tRNA(Thr) + L-threonine + ATP = L-threonyl-tRNA(Thr) + AMP + diphosphate + H(+). Catalyzes the attachment of threonine to tRNA(Thr) in a two-step reaction: L-threonine is first activated by ATP to form Thr-AMP and then transferred to the acceptor end of tRNA(Thr). Also edits incorrectly charged L-seryl-tRNA(Thr). The chain is Threonine--tRNA ligase from Streptococcus agalactiae serotype V (strain ATCC BAA-611 / 2603 V/R).